The primary structure comprises 204 residues: Large ribosomal subunit protein uL4 (204 aa).

A disordered region spans residues 49 to 90 (KVKGMGEVSGTTKKPYRQKGTGSARQGSLRAPQYRTGGAVHG).

The protein belongs to the universal ribosomal protein uL4 family. As to quaternary structure, part of the 50S ribosomal subunit.

Functionally, one of the primary rRNA binding proteins, this protein initially binds near the 5'-end of the 23S rRNA. It is important during the early stages of 50S assembly. It makes multiple contacts with different domains of the 23S rRNA in the assembled 50S subunit and ribosome. Its function is as follows. Forms part of the polypeptide exit tunnel. This Gluconacetobacter diazotrophicus (strain ATCC 49037 / DSM 5601 / CCUG 37298 / CIP 103539 / LMG 7603 / PAl5) protein is Large ribosomal subunit protein uL4.